The following is a 223-amino-acid chain: Cuticular glutathione peroxidase (223 aa).

The first 19 residues, Met1–Ala19, serve as a signal peptide directing secretion. Asn39 carries N-linked (GlcNAc...) asparagine glycosylation. Residue Cys74 is part of the active site. Asn92 is a glycosylation site (N-linked (GlcNAc...) asparagine).

It belongs to the glutathione peroxidase family. Homotetramer.

It is found in the secreted. It catalyses the reaction 2 glutathione + H2O2 = glutathione disulfide + 2 H2O. Could inhibit the oxidative burst of leukocytes and neutralize the secondary products of lipid peroxidation, thus providing the resistance of these parasites to immune effector mechanisms and their persistence in the mammalian host. It may also be involved in the formation of cross-linking residues such as dityrosine, trityrosine and isotrityrosine identified in cuticular collagen. Highly cross-linked external cortex may also serve to protect the parasite from immune attack. This is Cuticular glutathione peroxidase from Wuchereria bancrofti.